The primary structure comprises 222 residues: MTELDYQGTAEAASTSYSRNQTDLKPFPSAGSASSSIKTTEPVKDHRRRRSSSIISHVEPETFEDENDQQLLPNMNATWVDQRGAWIIHVVIIILLKLFYNLFPGVTTEWSWTLTNMTYVIGSYVMFHLIKGTPFDFNGGAYDNLTMWEQIDDETLYTPSRKFLISVPIALFLVSTHYAHYDLKLFSWNCFLTTFGAVVPKLPVTHRLRISIPGITGRAQIS.

The disordered stretch occupies residues Met1–His57. At Met1 to Ala85 the chain is on the cytoplasmic side. Over residues Ala12–Asp23 the composition is skewed to polar residues. A phosphoserine mark is found at Ser29, Ser32, and Ser56. The helical transmembrane segment at Trp86 to Val106 threads the bilayer. Topologically, residues Thr107–Glu109 are extracellular. Residues Trp110–Ile130 traverse the membrane as a helical segment. Over Lys131 to Lys162 the chain is Cytoplasmic. Residues Phe163–Leu183 form a helical membrane-spanning segment. Residue Lys184 is a topological domain, extracellular. A helical transmembrane segment spans residues Leu185–Thr205. The Cytoplasmic segment spans residues His206–Ser222.

Belongs to the ORM family. Component of the SPOTS complex, at least composed of LCB1/2 (LCB1 and/or LCB2), ORM1/2 (ORM1 and/or ORM2), SAC1 and TSC3. Post-translationally, phosphorylated in case of disruption of sphingolipid synthesis. Phosphorylation regulates inhibitory activity of serine palmitoyltransferases (LCB1 and LCB2).

The protein resides in the endoplasmic reticulum membrane. Component of the SPOTS complex that acts as a negative regulator of sphingolipid synthesis. Acts by inhibiting serine palmitoyltransferases (LCB1 and LCB2) activity. Along with ORM2, plays a role in the phosphorylation of LAC1 and YPK1, the distribution of actin patches between mother and daughter cells, and in endocytosis. Disruption or inhibition of sphingolipid synthesis leads to the activation and phosphorylation of YPK1 through the TORC2 and PKH1 pathways, which in turn phosphorylates ORM1 and LAG1 to activate sphingolipid synthesis. The chain is Protein ORM1 (ORM1) from Saccharomyces cerevisiae (strain ATCC 204508 / S288c) (Baker's yeast).